Consider the following 166-residue polypeptide: Phosphopantetheine adenylyltransferase (166 aa).

Serine 11 contributes to the substrate binding site. Residues 11–12 (SF) and histidine 19 each bind ATP. Lysine 43, leucine 75, and arginine 89 together coordinate substrate. ATP-binding positions include 90–92 (GLR), glutamate 100, and 125–131 (YGYLSSS).

It belongs to the bacterial CoaD family. As to quaternary structure, homohexamer. It depends on Mg(2+) as a cofactor.

Its subcellular location is the cytoplasm. It carries out the reaction (R)-4'-phosphopantetheine + ATP + H(+) = 3'-dephospho-CoA + diphosphate. It functions in the pathway cofactor biosynthesis; coenzyme A biosynthesis; CoA from (R)-pantothenate: step 4/5. Its function is as follows. Reversibly transfers an adenylyl group from ATP to 4'-phosphopantetheine, yielding dephospho-CoA (dPCoA) and pyrophosphate. In Syntrophotalea carbinolica (strain DSM 2380 / NBRC 103641 / GraBd1) (Pelobacter carbinolicus), this protein is Phosphopantetheine adenylyltransferase.